A 206-amino-acid chain; its full sequence is RNA pyrophosphohydrolase (206 aa).

The Nudix hydrolase domain occupies 6-149 (GYRPNVGIVL…KRGVYARALR (144 aa)). A Nudix box motif is present at residues 38–59 (GGMNTDETPVEAMYRELQEETG). The disordered stretch occupies residues 175–206 (MPGHTAGHDRPRKRPRSRGYWPKKAQGDVPPT).

This sequence belongs to the Nudix hydrolase family. RppH subfamily. Requires a divalent metal cation as cofactor.

Its function is as follows. Accelerates the degradation of transcripts by removing pyrophosphate from the 5'-end of triphosphorylated RNA, leading to a more labile monophosphorylated state that can stimulate subsequent ribonuclease cleavage. The sequence is that of RNA pyrophosphohydrolase from Stenotrophomonas maltophilia (strain R551-3).